Consider the following 333-residue polypeptide: Gap junction alpha-4 protein (333 aa).

Over 1 to 20 (MGDWGFLEKLLDQVQEHSTV) the chain is Cytoplasmic. A helical transmembrane segment spans residues 21-40 (VGKIWLTVLFIFRILILGLA). Residues 41–76 (GESVWGDEQSDFECNTAQPGCTNVCYDQAFPISHIR) are Extracellular-facing. A helical membrane pass occupies residues 77-99 (YWVLQFLFVSTPTLIYLGHVIYL). Residues 100-148 (SRREERLRQKEGELRALPSKDLHVERALAAIEHQMAKISVAEDGRLRIR) are Cytoplasmic-facing. The chain crosses the membrane as a helical span at residues 149 to 171 (GALMGTYVVSVLCKSVLEAGFLY). Over 172 to 208 (GQWRLYGWTMEPVFVCQRAPCPHIVDCYVSRPTEKTI) the chain is Extracellular. A helical transmembrane segment spans residues 209–231 (FIIFMLVVGVISLVLNLLELVHL). Over 232–333 (LCRCVSREIK…NSSASKKQYV (102 aa)) the chain is Cytoplasmic. The segment at 292–333 (ANLTTEERLTSSRPPPFVNTAPQGGRKSPSRPNSSASKKQYV) is disordered. A compositionally biased stretch (polar residues) spans 321-333 (SRPNSSASKKQYV).

It belongs to the connexin family. Alpha-type (group II) subfamily. As to quaternary structure, a connexon is composed of a hexamer of connexins. As to expression, highly expressed in lung.

The protein resides in the cell membrane. It is found in the cell junction. The protein localises to the gap junction. One gap junction consists of a cluster of closely packed pairs of transmembrane channels, the connexons, through which materials of low MW diffuse from one cell to a neighboring cell. The protein is Gap junction alpha-4 protein (Gja4) of Mus musculus (Mouse).